The primary structure comprises 405 residues: Tryptophan synthase beta chain (405 aa).

Residue Lys-96 is modified to N6-(pyridoxal phosphate)lysine.

This sequence belongs to the TrpB family. As to quaternary structure, tetramer of two alpha and two beta chains. It depends on pyridoxal 5'-phosphate as a cofactor.

It carries out the reaction (1S,2R)-1-C-(indol-3-yl)glycerol 3-phosphate + L-serine = D-glyceraldehyde 3-phosphate + L-tryptophan + H2O. The protein operates within amino-acid biosynthesis; L-tryptophan biosynthesis; L-tryptophan from chorismate: step 5/5. Its function is as follows. The beta subunit is responsible for the synthesis of L-tryptophan from indole and L-serine. In Clostridium botulinum (strain Alaska E43 / Type E3), this protein is Tryptophan synthase beta chain.